The primary structure comprises 124 residues: MLVIFLGILGLLANQVLGLPTQAGGHLRSTDNPPQEELGYWCTYMESCKFCWACAHGICKNKVNMSMPLIIENSYLTSCEVSRWYNQCTYSEGNGHYHVMDCSDPVPHNRPHRLLMKIYEKEDL.

Positions 1 to 18 are cleaved as a signal peptide; sequence MLVIFLGILGLLANQVLG. N-linked (GlcNAc...) asparagine; by host glycosylation occurs at Asn-64. Positions 121–124 match the Prevents secretion from ER motif; the sequence is KEDL.

The protein belongs to the asfivirus MGF 110 family.

It localises to the virion. The protein resides in the host endoplasmic reticulum-Golgi intermediate compartment. Functionally, causes the redistribution of lumenal ER protein to an enlarged ERGIC compartment. The chain is Protein MGF 110-4L-B from African swine fever virus (isolate Portugal/Lis 57/1957) (ASFV).